A 369-amino-acid chain; its full sequence is UDP-N-acetylglucosamine--N-acetylmuramyl-(pentapeptide) pyrophosphoryl-undecaprenol N-acetylglucosamine transferase (369 aa).

UDP-N-acetyl-alpha-D-glucosamine contacts are provided by residues 15–17, N126, R169, S197, and Q299; that span reads TGG.

Belongs to the glycosyltransferase 28 family. MurG subfamily.

It is found in the cell inner membrane. The enzyme catalyses di-trans,octa-cis-undecaprenyl diphospho-N-acetyl-alpha-D-muramoyl-L-alanyl-D-glutamyl-meso-2,6-diaminopimeloyl-D-alanyl-D-alanine + UDP-N-acetyl-alpha-D-glucosamine = di-trans,octa-cis-undecaprenyl diphospho-[N-acetyl-alpha-D-glucosaminyl-(1-&gt;4)]-N-acetyl-alpha-D-muramoyl-L-alanyl-D-glutamyl-meso-2,6-diaminopimeloyl-D-alanyl-D-alanine + UDP + H(+). It participates in cell wall biogenesis; peptidoglycan biosynthesis. In terms of biological role, cell wall formation. Catalyzes the transfer of a GlcNAc subunit on undecaprenyl-pyrophosphoryl-MurNAc-pentapeptide (lipid intermediate I) to form undecaprenyl-pyrophosphoryl-MurNAc-(pentapeptide)GlcNAc (lipid intermediate II). In Methylorubrum extorquens (strain PA1) (Methylobacterium extorquens), this protein is UDP-N-acetylglucosamine--N-acetylmuramyl-(pentapeptide) pyrophosphoryl-undecaprenol N-acetylglucosamine transferase.